A 487-amino-acid polypeptide reads, in one-letter code: Protein nucleotidyltransferase YdiU (487 aa).

The ATP site is built by glycine 86, glycine 88, arginine 89, lysine 109, aspartate 121, glycine 122, arginine 172, and arginine 179. The Proton acceptor role is filled by aspartate 248. Mg(2+)-binding residues include asparagine 249 and aspartate 258. Aspartate 258 contributes to the ATP binding site.

This sequence belongs to the SELO family. Mg(2+) serves as cofactor. Requires Mn(2+) as cofactor.

It carries out the reaction L-seryl-[protein] + ATP = 3-O-(5'-adenylyl)-L-seryl-[protein] + diphosphate. The enzyme catalyses L-threonyl-[protein] + ATP = 3-O-(5'-adenylyl)-L-threonyl-[protein] + diphosphate. The catalysed reaction is L-tyrosyl-[protein] + ATP = O-(5'-adenylyl)-L-tyrosyl-[protein] + diphosphate. It catalyses the reaction L-histidyl-[protein] + UTP = N(tele)-(5'-uridylyl)-L-histidyl-[protein] + diphosphate. It carries out the reaction L-seryl-[protein] + UTP = O-(5'-uridylyl)-L-seryl-[protein] + diphosphate. The enzyme catalyses L-tyrosyl-[protein] + UTP = O-(5'-uridylyl)-L-tyrosyl-[protein] + diphosphate. Nucleotidyltransferase involved in the post-translational modification of proteins. It can catalyze the addition of adenosine monophosphate (AMP) or uridine monophosphate (UMP) to a protein, resulting in modifications known as AMPylation and UMPylation. The sequence is that of Protein nucleotidyltransferase YdiU from Sphingopyxis alaskensis (strain DSM 13593 / LMG 18877 / RB2256) (Sphingomonas alaskensis).